The chain runs to 401 residues: MTERIVLAYSGGLDTSVAIGWIGEATGAEVIAVAVDVGQGGESLETIRQRALGCGAVEAYVADARDEFANEYAMPTLKANALYQGHYPLVSAISRPVIVKHLVKAAREFGATTVAHGCTGKGNDQVRFEVGIQTLGPDLKCIAPVRDLALTRDKAIAFAEEKGLPIETTKKNPYSIDQNVWGRAVETGYLEDIWNAPTKDIYDYTATPEFPPAPDEVTISFQAGVPVAIDGVKVSPLQAIQELNRRAGAQGVGRIDVVEDRLVGIKSREIYEAPGAMALITAHKHLEDITIEREQARFKATVGQRWAELVYDGQWFSPLKRSLDAFIEDTQKYVSGDIRMVLHGGQAIVNGRRSDTSLYDFDLATYDTGDTFDQSMARGFIELWGMSSKVASGRDLRVEGK.

8 to 16 (AYSGGLDTS) contributes to the ATP binding site. Residue Tyr87 participates in L-citrulline binding. Residue Gly117 participates in ATP binding. Positions 119, 123, and 124 each coordinate L-aspartate. Asn123 is an L-citrulline binding site. Residues Arg127, Ser175, Glu259, and Tyr271 each contribute to the L-citrulline site.

This sequence belongs to the argininosuccinate synthase family. Type 1 subfamily. In terms of assembly, homotetramer.

It localises to the cytoplasm. The enzyme catalyses L-citrulline + L-aspartate + ATP = 2-(N(omega)-L-arginino)succinate + AMP + diphosphate + H(+). The protein operates within amino-acid biosynthesis; L-arginine biosynthesis; L-arginine from L-ornithine and carbamoyl phosphate: step 2/3. The protein is Argininosuccinate synthase of Pseudarthrobacter chlorophenolicus (strain ATCC 700700 / DSM 12829 / CIP 107037 / JCM 12360 / KCTC 9906 / NCIMB 13794 / A6) (Arthrobacter chlorophenolicus).